We begin with the raw amino-acid sequence, 90 residues long: uncharacterized protein (90 aa).

Residues 1–18 form the signal peptide; it reads MKTLPVLVLSLTLLTVFS. The segment at 28–50 is disordered; sequence QAKQLLRSRRQDRPSKPGFPDEP.

It is found in the secreted. This is an uncharacterized protein from Homo sapiens (Human).